Here is a 399-residue protein sequence, read N- to C-terminus: UDP-N-acetylglucosamine--N-acetylmuramyl-(pentapeptide) pyrophosphoryl-undecaprenol N-acetylglucosamine transferase (399 aa).

Over residues 1–21 (MTSRFGHSHHPRRGRSARARA) the composition is skewed to basic residues. The disordered stretch occupies residues 1-30 (MTSRFGHSHHPRRGRSARARAGRREGVQSN). Residues 58 to 60 (TGG), N170, R206, S234, I288, and Q333 contribute to the UDP-N-acetyl-alpha-D-glucosamine site.

The protein belongs to the glycosyltransferase 28 family. MurG subfamily.

It localises to the cell inner membrane. It carries out the reaction di-trans,octa-cis-undecaprenyl diphospho-N-acetyl-alpha-D-muramoyl-L-alanyl-D-glutamyl-meso-2,6-diaminopimeloyl-D-alanyl-D-alanine + UDP-N-acetyl-alpha-D-glucosamine = di-trans,octa-cis-undecaprenyl diphospho-[N-acetyl-alpha-D-glucosaminyl-(1-&gt;4)]-N-acetyl-alpha-D-muramoyl-L-alanyl-D-glutamyl-meso-2,6-diaminopimeloyl-D-alanyl-D-alanine + UDP + H(+). It participates in cell wall biogenesis; peptidoglycan biosynthesis. Functionally, cell wall formation. Catalyzes the transfer of a GlcNAc subunit on undecaprenyl-pyrophosphoryl-MurNAc-pentapeptide (lipid intermediate I) to form undecaprenyl-pyrophosphoryl-MurNAc-(pentapeptide)GlcNAc (lipid intermediate II). This is UDP-N-acetylglucosamine--N-acetylmuramyl-(pentapeptide) pyrophosphoryl-undecaprenol N-acetylglucosamine transferase from Acidovorax ebreus (strain TPSY) (Diaphorobacter sp. (strain TPSY)).